The primary structure comprises 100 residues: Small ribosomal subunit protein bS20 (100 aa).

Belongs to the bacterial ribosomal protein bS20 family.

In terms of biological role, binds directly to 16S ribosomal RNA. This chain is Small ribosomal subunit protein bS20, found in Synechococcus sp. (strain JA-3-3Ab) (Cyanobacteria bacterium Yellowstone A-Prime).